The sequence spans 603 residues: Rab proteins geranylgeranyltransferase component A (603 aa).

Residue Ser-470 is modified to Phosphoserine.

The protein belongs to the Rab GDI family.

In terms of biological role, substrate-binding subunit (component A) of the Rab geranylgeranyltransferase (GGTase) complex. Binds unprenylated Rab proteins and presents the substrate peptide to the catalytic component B. The component A is thought to be regenerated by transferring its prenylated Rab back to the donor membrane. The sequence is that of Rab proteins geranylgeranyltransferase component A (MRS6) from Saccharomyces cerevisiae (strain ATCC 204508 / S288c) (Baker's yeast).